The sequence spans 391 residues: Mannose-6-phosphate isomerase (391 aa).

Zn(2+) is bound by residues Gln-97, His-99, Glu-134, and His-255. The active site involves Arg-274. Lys-280 is modified (N6-acetyllysine).

Belongs to the mannose-6-phosphate isomerase type 1 family. The cofactor is Zn(2+).

The protein localises to the cytoplasm. It catalyses the reaction D-mannose 6-phosphate = D-fructose 6-phosphate. Its function is as follows. Involved in the conversion of glucose to GDP-L-fucose, which can be converted to L-fucose, a capsular polysaccharide. In Escherichia coli (strain K12), this protein is Mannose-6-phosphate isomerase (manA).